We begin with the raw amino-acid sequence, 334 residues long: Lipoyl synthase (334 aa).

A disordered region spans residues 1-36 (MSDALIAPNASSSEAPQSPAEHYDPTRKQKSADKTA). Positions 7–20 (APNASSSEAPQSPA) are enriched in low complexity. Positions 21–36 (EHYDPTRKQKSADKTA) are enriched in basic and acidic residues. The [4Fe-4S] cluster site is built by cysteine 81, cysteine 86, cysteine 92, cysteine 107, cysteine 111, cysteine 114, and serine 321. The Radical SAM core domain occupies 92–310 (CFGKGTATFM…EEEAYKMGFT (219 aa)).

It belongs to the radical SAM superfamily. Lipoyl synthase family. [4Fe-4S] cluster is required as a cofactor.

The protein resides in the cytoplasm. The catalysed reaction is [[Fe-S] cluster scaffold protein carrying a second [4Fe-4S](2+) cluster] + N(6)-octanoyl-L-lysyl-[protein] + 2 oxidized [2Fe-2S]-[ferredoxin] + 2 S-adenosyl-L-methionine + 4 H(+) = [[Fe-S] cluster scaffold protein] + N(6)-[(R)-dihydrolipoyl]-L-lysyl-[protein] + 4 Fe(3+) + 2 hydrogen sulfide + 2 5'-deoxyadenosine + 2 L-methionine + 2 reduced [2Fe-2S]-[ferredoxin]. It participates in protein modification; protein lipoylation via endogenous pathway; protein N(6)-(lipoyl)lysine from octanoyl-[acyl-carrier-protein]: step 2/2. In terms of biological role, catalyzes the radical-mediated insertion of two sulfur atoms into the C-6 and C-8 positions of the octanoyl moiety bound to the lipoyl domains of lipoate-dependent enzymes, thereby converting the octanoylated domains into lipoylated derivatives. The polypeptide is Lipoyl synthase (Cupriavidus taiwanensis (strain DSM 17343 / BCRC 17206 / CCUG 44338 / CIP 107171 / LMG 19424 / R1) (Ralstonia taiwanensis (strain LMG 19424))).